A 91-amino-acid polypeptide reads, in one-letter code: UPF0223 protein SAR1071 (91 aa).

This sequence belongs to the UPF0223 family.

The sequence is that of UPF0223 protein SAR1071 from Staphylococcus aureus (strain MRSA252).